Reading from the N-terminus, the 400-residue chain is Argininosuccinate synthase (400 aa).

Residue 10–18 (AFSGGLDTT) participates in ATP binding. Tyrosine 87 lines the L-citrulline pocket. Glycine 117 serves as a coordination point for ATP. L-aspartate-binding residues include threonine 119, asparagine 123, and aspartate 124. An L-citrulline-binding site is contributed by asparagine 123. L-citrulline-binding residues include arginine 127, serine 173, serine 182, glutamate 255, and tyrosine 267.

This sequence belongs to the argininosuccinate synthase family. Type 1 subfamily. As to quaternary structure, homotetramer.

The protein localises to the cytoplasm. The enzyme catalyses L-citrulline + L-aspartate + ATP = 2-(N(omega)-L-arginino)succinate + AMP + diphosphate + H(+). The protein operates within amino-acid biosynthesis; L-arginine biosynthesis; L-arginine from L-ornithine and carbamoyl phosphate: step 2/3. The polypeptide is Argininosuccinate synthase (Natronomonas pharaonis (strain ATCC 35678 / DSM 2160 / CIP 103997 / JCM 8858 / NBRC 14720 / NCIMB 2260 / Gabara) (Halobacterium pharaonis)).